The chain runs to 274 residues: Undecaprenyl-diphosphatase 1 (274 aa).

8 helical membrane-spanning segments follow: residues 7–27, 48–68, 88–108, 115–135, 151–171, 189–209, 221–241, and 253–273; these read LEIF…WLPV, FIST…LVIF, VRLW…GILF, LFFN…IMIG, VTYK…IPGT, YVAA…ASAL, FEWL…IVVI, and FKVF…YFFL.

The protein belongs to the UppP family.

It localises to the cell membrane. It carries out the reaction di-trans,octa-cis-undecaprenyl diphosphate + H2O = di-trans,octa-cis-undecaprenyl phosphate + phosphate + H(+). Its function is as follows. Catalyzes the dephosphorylation of undecaprenyl diphosphate (UPP). Confers resistance to bacitracin. The protein is Undecaprenyl-diphosphatase 1 of Clostridioides difficile (strain 630) (Peptoclostridium difficile).